Reading from the N-terminus, the 474-residue chain is Glutamate--tRNA ligase (474 aa).

Positions 9–19 (PSPTGYLHVGG) match the 'HIGH' region motif. Positions 240–244 (KLSKR) match the 'KMSKS' region motif. Lys243 provides a ligand contact to ATP.

This sequence belongs to the class-I aminoacyl-tRNA synthetase family. Glutamate--tRNA ligase type 1 subfamily. As to quaternary structure, monomer.

It is found in the cytoplasm. The catalysed reaction is tRNA(Glu) + L-glutamate + ATP = L-glutamyl-tRNA(Glu) + AMP + diphosphate. In terms of biological role, catalyzes the attachment of glutamate to tRNA(Glu) in a two-step reaction: glutamate is first activated by ATP to form Glu-AMP and then transferred to the acceptor end of tRNA(Glu). This chain is Glutamate--tRNA ligase, found in Vibrio parahaemolyticus serotype O3:K6 (strain RIMD 2210633).